The chain runs to 58 residues: Small ribosomal subunit protein bS21 (58 aa).

The disordered stretch occupies residues 35–58 (REHYESPSVRRKKKSEAARKRRYK). A compositionally biased stretch (basic residues) spans 43–58 (VRRKKKSEAARKRRYK).

It belongs to the bacterial ribosomal protein bS21 family.

In Acetivibrio thermocellus (strain ATCC 27405 / DSM 1237 / JCM 9322 / NBRC 103400 / NCIMB 10682 / NRRL B-4536 / VPI 7372) (Clostridium thermocellum), this protein is Small ribosomal subunit protein bS21.